The chain runs to 242 residues: 7-cyano-7-deazaguanine synthase (242 aa).

12 to 22 (FSGGQDSTTCL) contributes to the ATP binding site. Positions 200, 215, 218, and 221 each coordinate Zn(2+).

The protein belongs to the QueC family. Zn(2+) is required as a cofactor.

It carries out the reaction 7-carboxy-7-deazaguanine + NH4(+) + ATP = 7-cyano-7-deazaguanine + ADP + phosphate + H2O + H(+). It functions in the pathway purine metabolism; 7-cyano-7-deazaguanine biosynthesis. Functionally, catalyzes the ATP-dependent conversion of 7-carboxy-7-deazaguanine (CDG) to 7-cyano-7-deazaguanine (preQ(0)). The sequence is that of 7-cyano-7-deazaguanine synthase from Nitratidesulfovibrio vulgaris (strain ATCC 29579 / DSM 644 / CCUG 34227 / NCIMB 8303 / VKM B-1760 / Hildenborough) (Desulfovibrio vulgaris).